Reading from the N-terminus, the 312-residue chain is Porphobilinogen deaminase (312 aa).

Cys-243 carries the S-(dipyrrolylmethanemethyl)cysteine modification.

Belongs to the HMBS family. In terms of assembly, monomer. Requires dipyrromethane as cofactor.

The catalysed reaction is 4 porphobilinogen + H2O = hydroxymethylbilane + 4 NH4(+). The protein operates within porphyrin-containing compound metabolism; protoporphyrin-IX biosynthesis; coproporphyrinogen-III from 5-aminolevulinate: step 2/4. Tetrapolymerization of the monopyrrole PBG into the hydroxymethylbilane pre-uroporphyrinogen in several discrete steps. This Vibrio campbellii (strain ATCC BAA-1116) protein is Porphobilinogen deaminase.